The primary structure comprises 142 residues: MKTFVAKPHEVQRDWFVIDAKGKVLGRVASEVARRLRGKHKPEFTPHVDTGDYIVIINAAEIVVTGNKAQDKKYFRHTTYPGGIRETNFEKLQQRFPGRAIQKAVKGMLPKGPLGYAMIKKLKVYAGAEHPHTAQQPKPLDI.

The protein belongs to the universal ribosomal protein uL13 family. As to quaternary structure, part of the 50S ribosomal subunit.

In terms of biological role, this protein is one of the early assembly proteins of the 50S ribosomal subunit, although it is not seen to bind rRNA by itself. It is important during the early stages of 50S assembly. The protein is Large ribosomal subunit protein uL13 of Bordetella petrii (strain ATCC BAA-461 / DSM 12804 / CCUG 43448).